Consider the following 107-residue polypeptide: U1-lycotoxin-Ls1v (107 aa).

The first 20 residues, 1 to 20 (MMKVLVVVALLVTLISYSSS), serve as a signal peptide directing secretion. The propeptide occupies 21–41 (EGIDDLEADELLSLTANEQTR). 4 cysteine pairs are disulfide-bonded: Cys-44-Cys-59, Cys-51-Cys-68, Cys-58-Cys-86, and Cys-70-Cys-84.

Belongs to the neurotoxin 19 (CSTX) family. 04 (U1-Lctx) subfamily. Expressed by the venom gland.

The protein localises to the secreted. In Lycosa singoriensis (Wolf spider), this protein is U1-lycotoxin-Ls1v.